The following is a 282-amino-acid chain: Probable endonuclease LCL3 (282 aa).

The helical transmembrane segment at 55–71 threads the bilayer; sequence SNLIPTVLLTSGILFAV. The TNase-like domain occupies 95–256; sequence RSILGKVTSV…KKKGKGLWKA (162 aa). Residue arginine 144 is part of the active site. Residue aspartate 149 participates in Ca(2+) binding. Catalysis depends on residues glutamate 152 and arginine 192.

This sequence belongs to the LCL3 family.

The protein localises to the mitochondrion. Its subcellular location is the membrane. The polypeptide is Probable endonuclease LCL3 (LCL3) (Arthroderma otae (strain ATCC MYA-4605 / CBS 113480) (Microsporum canis)).